Here is a 544-residue protein sequence, read N- to C-terminus: CTP synthase (544 aa).

Positions 1 to 267 (MAKFVFITGG…AQRVLQILNL (267 aa)) are amidoligase domain. Ser-13 provides a ligand contact to CTP. Position 13 (Ser-13) interacts with UTP. An ATP-binding site is contributed by 14-19 (SIGKGI). Residue Tyr-54 participates in L-glutamine binding. Residue Asp-71 participates in ATP binding. The Mg(2+) site is built by Asp-71 and Glu-141. Residues 148–150 (DIE), 188–193 (KTKPTQ), and Lys-224 each bind CTP. Residues 188-193 (KTKPTQ) and Lys-224 contribute to the UTP site. Positions 292–534 (EIAIVGKYVR…IEAALRSRSR (243 aa)) constitute a Glutamine amidotransferase type-1 domain. Gly-354 is a binding site for L-glutamine. The active-site Nucleophile; for glutamine hydrolysis is Cys-381. Residues 382–385 (LGMQ), Glu-405, and Arg-462 each bind L-glutamine. Active-site residues include His-507 and Glu-509.

This sequence belongs to the CTP synthase family. In terms of assembly, homotetramer.

It catalyses the reaction UTP + L-glutamine + ATP + H2O = CTP + L-glutamate + ADP + phosphate + 2 H(+). The enzyme catalyses L-glutamine + H2O = L-glutamate + NH4(+). It carries out the reaction UTP + NH4(+) + ATP = CTP + ADP + phosphate + 2 H(+). It participates in pyrimidine metabolism; CTP biosynthesis via de novo pathway; CTP from UDP: step 2/2. With respect to regulation, allosterically activated by GTP, when glutamine is the substrate; GTP has no effect on the reaction when ammonia is the substrate. The allosteric effector GTP functions by stabilizing the protein conformation that binds the tetrahedral intermediate(s) formed during glutamine hydrolysis. Inhibited by the product CTP, via allosteric rather than competitive inhibition. Catalyzes the ATP-dependent amination of UTP to CTP with either L-glutamine or ammonia as the source of nitrogen. Regulates intracellular CTP levels through interactions with the four ribonucleotide triphosphates. This is CTP synthase from Synechococcus sp. (strain JA-3-3Ab) (Cyanobacteria bacterium Yellowstone A-Prime).